Here is a 240-residue protein sequence, read N- to C-terminus: Methylthioribulose-1-phosphate dehydratase (240 aa).

Cysteine 99 lines the substrate pocket. Zn(2+)-binding residues include histidine 116 and histidine 118. Glutamate 145 functions as the Proton donor/acceptor in the catalytic mechanism. Zn(2+) is bound at residue histidine 201.

It belongs to the aldolase class II family. MtnB subfamily. It depends on Zn(2+) as a cofactor.

Its subcellular location is the cytoplasm. It carries out the reaction 5-(methylsulfanyl)-D-ribulose 1-phosphate = 5-methylsulfanyl-2,3-dioxopentyl phosphate + H2O. It functions in the pathway amino-acid biosynthesis; L-methionine biosynthesis via salvage pathway; L-methionine from S-methyl-5-thio-alpha-D-ribose 1-phosphate: step 2/6. In terms of biological role, catalyzes the dehydration of methylthioribulose-1-phosphate (MTRu-1-P) into 2,3-diketo-5-methylthiopentyl-1-phosphate (DK-MTP-1-P). The polypeptide is Methylthioribulose-1-phosphate dehydratase (Paracoccidioides brasiliensis (strain Pb03)).